Reading from the N-terminus, the 481-residue chain is Glutamyl-tRNA(Gln) amidotransferase subunit A (481 aa).

Catalysis depends on charge relay system residues Lys77 and Ser151. Residue Ser175 is the Acyl-ester intermediate of the active site.

Belongs to the amidase family. GatA subfamily. Heterotrimer of A, B and C subunits.

It carries out the reaction L-glutamyl-tRNA(Gln) + L-glutamine + ATP + H2O = L-glutaminyl-tRNA(Gln) + L-glutamate + ADP + phosphate + H(+). Allows the formation of correctly charged Gln-tRNA(Gln) through the transamidation of misacylated Glu-tRNA(Gln) in organisms which lack glutaminyl-tRNA synthetase. The reaction takes place in the presence of glutamine and ATP through an activated gamma-phospho-Glu-tRNA(Gln). This Rubrobacter xylanophilus (strain DSM 9941 / JCM 11954 / NBRC 16129 / PRD-1) protein is Glutamyl-tRNA(Gln) amidotransferase subunit A.